The chain runs to 332 residues: 5-dehydro-2-deoxygluconokinase (332 aa).

The protein belongs to the carbohydrate kinase PfkB family.

The enzyme catalyses 5-dehydro-2-deoxy-D-gluconate + ATP = 6-phospho-5-dehydro-2-deoxy-D-gluconate + ADP + H(+). It functions in the pathway polyol metabolism; myo-inositol degradation into acetyl-CoA; acetyl-CoA from myo-inositol: step 5/7. Functionally, catalyzes the phosphorylation of 5-dehydro-2-deoxy-D-gluconate (2-deoxy-5-keto-D-gluconate or DKG) to 6-phospho-5-dehydro-2-deoxy-D-gluconate (DKGP). This chain is 5-dehydro-2-deoxygluconokinase, found in Bacillus anthracis (strain A0248).